Reading from the N-terminus, the 213-residue chain is Orotidine 5'-phosphate decarboxylase (213 aa).

Residues Asp11, Lys33, 61–70 (DLKLADIPNT), Ser113, 166–176 (PGVGAQGGKAS), Gly189, and Arg190 contribute to the substrate site. The active-site Proton donor is Lys63.

It belongs to the OMP decarboxylase family. Type 1 subfamily. Homodimer.

It carries out the reaction orotidine 5'-phosphate + H(+) = UMP + CO2. The protein operates within pyrimidine metabolism; UMP biosynthesis via de novo pathway; UMP from orotate: step 2/2. Catalyzes the decarboxylation of orotidine 5'-monophosphate (OMP) to uridine 5'-monophosphate (UMP). This is Orotidine 5'-phosphate decarboxylase from Thermococcus kodakarensis (strain ATCC BAA-918 / JCM 12380 / KOD1) (Pyrococcus kodakaraensis (strain KOD1)).